The primary structure comprises 407 residues: Myeloid cell nuclear differentiation antigen (407 aa).

One can recognise a Pyrin domain in the interval 1–88 (MVNEYKKILL…VNNLRKEKSK (88 aa)). Residues 108–207 (EVGLAAPAPT…RQVDARRNVP (100 aa)) are disordered. The Nuclear localization signal motif lies at 131-137 (PVAQKRK). The span at 139 to 148 (PNKEKTEAKR) shows a compositional bias: basic and acidic residues. Positions 177–190 (QTSSSTPSNTSFTP) are enriched in low complexity. The HIN-200 domain occupies 196-394 (AQRQVDARRN…CGSHSFIKVI (199 aa)).

In terms of assembly, participates in a ternary complex with YY1 and the YY1 target DNA element. Binds nucleolin and nucleophosmin/NPM/B23. Expressed constitutively in cells of the myeloid lineage. Found in promyelocyte stage cells as well as in all other stage cells including peripheral blood monocytes and granulocytes. Also appears in myeloblast cells in some cases of acute myeloid Leukemia.

It is found in the nucleus. It localises to the cytoplasm. Its function is as follows. May act as a transcriptional activator/repressor in the myeloid lineage. Plays a role in the granulocyte/monocyte cell-specific response to interferon. Stimulates the DNA binding of the transcriptional repressor protein YY1. This chain is Myeloid cell nuclear differentiation antigen (MNDA), found in Homo sapiens (Human).